Here is a 245-residue protein sequence, read N- to C-terminus: Probable phosphatase YcdX (245 aa).

Zn(2+)-binding residues include His7, His9, His15, His40, Glu73, His101, His131, Asp192, and His194.

Belongs to the PHP family. Homotrimer. Zn(2+) is required as a cofactor.

In Salmonella heidelberg (strain SL476), this protein is Probable phosphatase YcdX.